The following is a 118-amino-acid chain: ATP synthase subunit g, mitochondrial (118 aa).

In terms of assembly, F-type ATP synthases have 2 components, the catalytic core F(1) and the membrane-embedded component F(0), linked together by a central stalk and a peripheral stalk. The central stalk, also called rotor shaft, is often seen as part of F(1). The peripheral stalk is seen as part of F(0). F(0) contains the membrane channel next to the rotor. F-type ATP synthases form dimers but each monomer functions independently in ATP generation. The dimer consists of 18 different polypeptides: ATP1 (subunit alpha, part of F(1), 3 molecules per monomer), ATP2 (subunit beta, part of F(1), 3 molecules per monomer), ATP3 (subunit gamma, part of the central stalk), ATP4 (subunit b, part of the peripheral stalk), ATP5/OSCP (subunit 5/OSCP, part of the peripheral stalk), ATP6 (subunit a, part of the peripheral stalk), ATP7 (subunit d, part of the peripheral stalk), ATP8 (subunit 8, part of the peripheral stalk), OLI1 (subunit c, part of the rotor, 10 molecules per monomer), ATP14 (subunit h, part of the peripheral stalk), ATP15 (subunit epsilon, part of the central stalk), ATP16 (subunit delta, part of the central stalk), ATP17 (subunit f, part of the peripheral stalk), ATP18 (subunit i/j, part of the peripheral stalk). Dimer-specific subunits are ATP19 (subunit k, at interface between monomers), ATP20 (subunit g, at interface between monomers), TIM11 (subunit e, at interface between monomers). Also contains subunit L.

The protein localises to the mitochondrion inner membrane. Its function is as follows. Mitochondrial membrane ATP synthase (F(1)F(0) ATP synthase or Complex V) produces ATP from ADP in the presence of a proton gradient across the membrane which is generated by electron transport complexes of the respiratory chain. F-type ATP synthases consist of two structural domains, F(1) - containing the extramembraneous catalytic core, and F(0) - containing the membrane proton channel, linked together by a central stalk and a peripheral stalk. During catalysis, ATP synthesis in the catalytic domain of F(1) is coupled via a rotary mechanism of the central stalk subunits to proton translocation. Part of the complex F(0) domain Minor subunit located with subunit a/ATP6 in the membrane. Together with subunit e/TIM11, probably contributes to membrane curvature at the site of the ATP synthase dimer, ultimately contributing to formation of cristae. The protein is ATP synthase subunit g, mitochondrial of Pichia angusta (Yeast).